A 612-amino-acid polypeptide reads, in one-letter code: tRNA(Met) cytidine acetyltransferase TmcA (612 aa).

ATP is bound by residues Gln136, 161–170, and Arg284; that span reads GRGKSTLLGQ. The N-acetyltransferase domain occupies 319–499; it reads KHASELEEAL…PAAIYALPLT (181 aa). 424-426 contributes to the acetyl-CoA binding site; that stretch reads IAV.

Belongs to the RNA cytidine acetyltransferase family. TmcA subfamily.

It localises to the cytoplasm. The catalysed reaction is cytidine(34) in elongator tRNA(Met) + acetyl-CoA + ATP + H2O = N(4)-acetylcytidine(34) in elongator tRNA(Met) + ADP + phosphate + CoA + H(+). In terms of biological role, catalyzes the formation of N(4)-acetylcytidine (ac(4)C) at the wobble position of tRNA(Met), by using acetyl-CoA as an acetyl donor and ATP (or GTP). This is tRNA(Met) cytidine acetyltransferase TmcA from Idiomarina loihiensis (strain ATCC BAA-735 / DSM 15497 / L2-TR).